The primary structure comprises 101 residues: Small ribosomal subunit protein uS14 (101 aa).

Belongs to the universal ribosomal protein uS14 family. Part of the 30S ribosomal subunit. Contacts proteins S3 and S10.

Its function is as follows. Binds 16S rRNA, required for the assembly of 30S particles and may also be responsible for determining the conformation of the 16S rRNA at the A site. The protein is Small ribosomal subunit protein uS14 of Orientia tsutsugamushi (strain Boryong) (Rickettsia tsutsugamushi).